A 755-amino-acid polypeptide reads, in one-letter code: Tryptophan 2-monooxygenase (755 aa).

Ser-247, Glu-267, Lys-275, and Arg-295 together coordinate FMN. Arg-295 is a binding site for substrate.

This sequence belongs to the tryptophan 2-monooxygenase family. The cofactor is FMN.

The enzyme catalyses L-tryptophan + O2 = indole-3-acetamide + CO2 + H2O. It participates in plant hormone metabolism; auxin biosynthesis. The sequence is that of Tryptophan 2-monooxygenase (iaaM) from Agrobacterium vitis (Rhizobium vitis).